A 230-amino-acid polypeptide reads, in one-letter code: Large ribosomal subunit protein uL1 (230 aa).

This sequence belongs to the universal ribosomal protein uL1 family. Part of the 50S ribosomal subunit.

Functionally, binds directly to 23S rRNA. The L1 stalk is quite mobile in the ribosome, and is involved in E site tRNA release. In terms of biological role, protein L1 is also a translational repressor protein, it controls the translation of the L11 operon by binding to its mRNA. This chain is Large ribosomal subunit protein uL1, found in Aster yellows witches'-broom phytoplasma (strain AYWB).